Reading from the N-terminus, the 311-residue chain is Small ribosomal subunit biogenesis GTPase RsgA (311 aa).

Residues 88–246 (SKEKEQVIVA…VIDTPGIREF (159 aa)) form the CP-type G domain. GTP is bound by residues 137-140 (NKID) and 188-196 (GHSGVGKST). The Zn(2+) site is built by Cys-270, Cys-275, His-277, and Cys-283.

Belongs to the TRAFAC class YlqF/YawG GTPase family. RsgA subfamily. As to quaternary structure, monomer. Associates with 30S ribosomal subunit, binds 16S rRNA. Zn(2+) is required as a cofactor.

It is found in the cytoplasm. In terms of biological role, one of several proteins that assist in the late maturation steps of the functional core of the 30S ribosomal subunit. Helps release RbfA from mature subunits. May play a role in the assembly of ribosomal proteins into the subunit. Circularly permuted GTPase that catalyzes slow GTP hydrolysis, GTPase activity is stimulated by the 30S ribosomal subunit. The polypeptide is Small ribosomal subunit biogenesis GTPase RsgA (Chlorobaculum tepidum (strain ATCC 49652 / DSM 12025 / NBRC 103806 / TLS) (Chlorobium tepidum)).